Here is a 118-residue protein sequence, read N- to C-terminus: Small ribosomal subunit protein uS13 (118 aa).

Positions 92–118 (RRGLPVRGQRTKTNARTRKGPRKPIKK) are disordered.

This sequence belongs to the universal ribosomal protein uS13 family. As to quaternary structure, part of the 30S ribosomal subunit. Forms a loose heterodimer with protein S19. Forms two bridges to the 50S subunit in the 70S ribosome.

Located at the top of the head of the 30S subunit, it contacts several helices of the 16S rRNA. In the 70S ribosome it contacts the 23S rRNA (bridge B1a) and protein L5 of the 50S subunit (bridge B1b), connecting the 2 subunits; these bridges are implicated in subunit movement. Contacts the tRNAs in the A and P-sites. The protein is Small ribosomal subunit protein uS13 of Yersinia pestis.